A 371-amino-acid chain; its full sequence is Polar tube protein 1 (371 aa).

An N-terminal signal peptide occupies residues 1 to 22 (MKGISKVLSASIVLMKLKGVYS). Low complexity-rich tracts occupy residues 65 to 94 (PSTPTTMPSTVPGTTGESETPTSPTSSPTE) and 255 to 270 (TSGTPTPSVSQSQSGQ). Disordered regions lie at residues 65 to 95 (PSTPTTMPSTVPGTTGESETPTSPTSSPTED) and 229 to 270 (QSSG…QSGQ).

In terms of processing, glycosylated.

Its subcellular location is the spore polar tube. Its function is as follows. Involved with PTP2 and PTP3 in formation of a polar tube through which the infectious agent is passed on to the host cell. In Encephalitozoon intestinalis (Microsporidian parasite), this protein is Polar tube protein 1 (PTP1).